Here is a 248-residue protein sequence, read N- to C-terminus: Homeotic protein ultrabithorax (248 aa).

Residues 116-125 (GTGGGGGGSA) are compositionally biased toward gly residues. Residues 116–191 (GTGGGGGGSA…GSAGVVGGAG (76 aa)) form a disordered region. The segment covering 126-139 (GSANGANNTANGQN) has biased composition (low complexity). Composition is skewed to gly residues over residues 140–152 (TSGG…GGGM) and 182–191 (GSAGVVGGAG). Residues 241 to 246 (FYPWMA) carry the Antp-type hexapeptide motif.

The protein belongs to the Antp homeobox family.

The protein resides in the nucleus. In terms of biological role, sequence-specific transcription factor which is part of a developmental regulatory system that provides cells with specific positional identities on the anterior-posterior axis. Binds the consensus region 5'-TTAAT[GT][GA]-3'. This is Homeotic protein ultrabithorax (Ubx) from Musca domestica (House fly).